Here is a 156-residue protein sequence, read N- to C-terminus: Transcription elongation factor GreA (156 aa).

Residues Met-1–Glu-84 are a coiled coil.

It belongs to the GreA/GreB family.

Functionally, necessary for efficient RNA polymerase transcription elongation past template-encoded arresting sites. The arresting sites in DNA have the property of trapping a certain fraction of elongating RNA polymerases that pass through, resulting in locked ternary complexes. Cleavage of the nascent transcript by cleavage factors such as GreA or GreB allows the resumption of elongation from the new 3'terminus. GreA releases sequences of 2 to 3 nucleotides. The polypeptide is Transcription elongation factor GreA (Ureaplasma urealyticum serovar 10 (strain ATCC 33699 / Western)).